Here is a 229-residue protein sequence, read N- to C-terminus: Potassium/proton antiporter CemA (229 aa).

Helical transmembrane passes span 7–27 (FTPL…SFSV), 107–127 (ILHF…SILG), and 189–209 (IISG…KYWI).

Belongs to the CemA family.

The protein localises to the plastid. It localises to the chloroplast inner membrane. It catalyses the reaction K(+)(in) + H(+)(out) = K(+)(out) + H(+)(in). In terms of biological role, contributes to K(+)/H(+) antiport activity by supporting proton efflux to control proton extrusion and homeostasis in chloroplasts in a light-dependent manner to modulate photosynthesis. Prevents excessive induction of non-photochemical quenching (NPQ) under continuous-light conditions. Indirectly promotes efficient inorganic carbon uptake into chloroplasts. The sequence is that of Potassium/proton antiporter CemA from Nicotiana tomentosiformis (Tobacco).